Here is a 699-residue protein sequence, read N- to C-terminus: Elongation factor G 1 (699 aa).

The region spanning 8–290 (ERYRNIGICA…AVIEYLPSPI (283 aa)) is the tr-type G domain. GTP-binding positions include 17-24 (AHVDAGKT), 88-92 (DTPGH), and 142-145 (NKMD).

This sequence belongs to the TRAFAC class translation factor GTPase superfamily. Classic translation factor GTPase family. EF-G/EF-2 subfamily.

The protein resides in the cytoplasm. Catalyzes the GTP-dependent ribosomal translocation step during translation elongation. During this step, the ribosome changes from the pre-translocational (PRE) to the post-translocational (POST) state as the newly formed A-site-bound peptidyl-tRNA and P-site-bound deacylated tRNA move to the P and E sites, respectively. Catalyzes the coordinated movement of the two tRNA molecules, the mRNA and conformational changes in the ribosome. The sequence is that of Elongation factor G 1 from Vibrio vulnificus (strain YJ016).